The following is a 601-amino-acid chain: Glutamyl-tRNA(Gln) amidotransferase subunit B, mitochondrial (601 aa).

The N-terminal 55 residues, Met-1–Ser-55, are a transit peptide targeting the mitochondrion.

This sequence belongs to the GatB/GatE family. GatB subfamily. As to quaternary structure, subunit of the heterotrimeric GatCAB amidotransferase (AdT) complex, composed of A, B and C subunits.

The protein localises to the mitochondrion. It catalyses the reaction L-glutamyl-tRNA(Gln) + L-glutamine + ATP + H2O = L-glutaminyl-tRNA(Gln) + L-glutamate + ADP + phosphate + H(+). Allows the formation of correctly charged Gln-tRNA(Gln) through the transamidation of misacylated Glu-tRNA(Gln) in the mitochondria. The reaction takes place in the presence of glutamine and ATP through an activated gamma-phospho-Glu-tRNA(Gln). The protein is Glutamyl-tRNA(Gln) amidotransferase subunit B, mitochondrial of Aspergillus niger (strain ATCC MYA-4892 / CBS 513.88 / FGSC A1513).